Reading from the N-terminus, the 621-residue chain is KIF-binding protein (621 aa).

Ser178 bears the Phosphoserine mark.

Belongs to the KIF-binding protein family. As to quaternary structure, interacts with KIF1B; positively regulates KIF1B microtubule motor activity. Interacts with STMN2.

Its subcellular location is the cytoplasm. It localises to the cytoskeleton. Functionally, activator of KIF1B plus-end-directed microtubule motor activity. Required for organization of axonal microtubules, and axonal outgrowth and maintenance during peripheral and central nervous system development. The sequence is that of KIF-binding protein (KIFBP) from Bos taurus (Bovine).